The following is a 136-amino-acid chain: uncharacterized protein (136 aa).

It belongs to the MG439/MG440 family.

This is an uncharacterized protein from Mycoplasma pneumoniae (strain ATCC 29342 / M129 / Subtype 1) (Mycoplasmoides pneumoniae).